Here is a 405-residue protein sequence, read N- to C-terminus: GTPase Obg (405 aa).

One can recognise an Obg domain in the interval 1-159 (MRFIDEAVVT…KVLKFELKVV (159 aa)). The OBG-type G domain occupies 160–333 (ADVGLIGLPN…IKYHLMNEIE (174 aa)). GTP contacts are provided by residues 166–173 (GLPNAGKS), 191–195 (FTTLV), 213–216 (DIPG), 283–286 (NKID), and 314–316 (ATL). The Mg(2+) site is built by Ser173 and Thr193. Positions 371–382 (YRAARKAAREGT) are enriched in basic and acidic residues. Residues 371-405 (YRAARKAAREGTDLSDDDFDGSDDDDDGVEVIYAP) form a disordered region. Acidic residues predominate over residues 383–399 (DLSDDDFDGSDDDDDGV).

This sequence belongs to the TRAFAC class OBG-HflX-like GTPase superfamily. OBG GTPase family. In terms of assembly, monomer. It depends on Mg(2+) as a cofactor.

The protein localises to the cytoplasm. In terms of biological role, an essential GTPase which binds GTP, GDP and possibly (p)ppGpp with moderate affinity, with high nucleotide exchange rates and a fairly low GTP hydrolysis rate. Plays a role in control of the cell cycle, stress response, ribosome biogenesis and in those bacteria that undergo differentiation, in morphogenesis control. This chain is GTPase Obg, found in Psychrobacter arcticus (strain DSM 17307 / VKM B-2377 / 273-4).